We begin with the raw amino-acid sequence, 611 residues long: Exonuclease V, mitochondrial (611 aa).

The interval 19–42 (VTSEHEQVQSISKEESRSLSSNDL) is disordered. Residues 21-35 (SEHEQVQSISKEESR) are compositionally biased toward basic and acidic residues. [4Fe-4S] cluster contacts are provided by Cys147, Cys569, Cys572, and Cys578.

The protein belongs to the EXO5 family. As to quaternary structure, monomer. The cofactor is Mg(2+). [4Fe-4S] cluster serves as cofactor.

Its subcellular location is the mitochondrion. In terms of biological role, single strand DNA specific 5'exonuclease involved in mitochondrial DNA replication and recombination. Releases dinucleotides as main products of catalysis. Has the capacity to slide across 5'double-stranded DNA or 5'RNA sequences and resumes cutting two nucleotides downstream of the double-stranded-to-single-stranded junction or RNA-to-DNA junction, respectively. The sequence is that of Exonuclease V, mitochondrial (EXO5) from Candida albicans (strain WO-1) (Yeast).